Consider the following 490-residue polypeptide: Arginine decarboxylase (490 aa).

Lys-226 bears the N6-(pyridoxal phosphate)lysine mark.

Belongs to the Orn/Lys/Arg decarboxylase class-I family. It depends on pyridoxal 5'-phosphate as a cofactor.

The protein localises to the cytoplasm. The enzyme catalyses L-arginine + H(+) = agmatine + CO2. It participates in amine and polyamine biosynthesis; agmatine biosynthesis; agmatine from L-arginine: step 1/1. Its function is as follows. Catalyzes the formation of agmatine from arginine. This Bacillus subtilis (strain 168) protein is Arginine decarboxylase (speA).